We begin with the raw amino-acid sequence, 295 residues long: WHI2-like protein P4H10.16c (295 aa).

The protein belongs to the WHI2 family.

It is found in the cytoplasm. Its subcellular location is the nucleus. This is WHI2-like protein P4H10.16c from Schizosaccharomyces pombe (strain 972 / ATCC 24843) (Fission yeast).